Here is a 759-residue protein sequence, read N- to C-terminus: NADP-dependent malic enzyme (759 aa).

The tract at residues 1–428 (MDDQLKQSAL…KLTEFVYKTN (428 aa)) is malic enzyme. The active-site Proton donor is the Y39. K56 carries the post-translational modification N6-acetyllysine. Catalysis depends on K94, which acts as the Proton acceptor. Residues E136, D137, and D162 each contribute to the a divalent metal cation site. NADP(+) is bound by residues 195 to 198 (AGAA), N288, and N320. Positions 429 to 759 (LFMKPIFSQA…AVVEAQTQPL (331 aa)) are phosphate acetyltransferase; required for oligomerization, inhibition by acetyl-CoA and activation by glutamate, aspartate, and glucose-6-phosphate.

In the N-terminal section; belongs to the malic enzymes family. The protein in the C-terminal section; belongs to the phosphate acetyltransferase and butyryltransferase family. Homooligomer, possibly an octamer. It depends on Mg(2+) as a cofactor. Mn(2+) serves as cofactor.

It carries out the reaction (S)-malate + NADP(+) = pyruvate + CO2 + NADPH. It catalyses the reaction oxaloacetate + H(+) = pyruvate + CO2. Its activity is regulated as follows. Inhibited by 4 mM Mg(2+) and acetyl-CoA, competitively inhibited by fumarate and oxaloacetate. Activated by glutamate and aspartate, glucose-6-phosphate, acetyl-phosphate and 2 mM KCl. In terms of biological role, catalyzes the decarboxylation of malate to pyruvate. In vitro, shows malolactic enzyme activity in the presence of NADPH. However, it is unlikely that this activity is of relevance in E.coli, which produces little NADPH. This Escherichia coli (strain K12) protein is NADP-dependent malic enzyme (maeB).